The chain runs to 122 residues: UPF0102 protein TTE1452 (122 aa).

The protein belongs to the UPF0102 family.

The chain is UPF0102 protein TTE1452 from Caldanaerobacter subterraneus subsp. tengcongensis (strain DSM 15242 / JCM 11007 / NBRC 100824 / MB4) (Thermoanaerobacter tengcongensis).